The sequence spans 859 residues: Low-density lipoprotein receptor-related protein 12 (859 aa).

The N-terminal stretch at 1–32 (MACRWSTKESPRWRSALLLLFLAGVYGNGALA) is a signal peptide. Residues 33–492 (EHSENVHISG…ENCPVIVPTR (460 aa)) lie on the Extracellular side of the membrane. 2 disulfides stabilise this stretch: Cys47–Cys76 and Cys103–Cys122. The 113-residue stretch at 47–159 (CGETPEQIRA…KGFRLAYFSG (113 aa)) folds into the CUB 1 domain. A glycan (N-linked (GlcNAc...) asparagine) is linked at Asn75. The N-linked (GlcNAc...) asparagine glycan is linked to Asn146. LDL-receptor class A domains follow at residues 165 to 201 (NCAC…EICA) and 214 to 255 (PCAY…IDCD). 7 cysteine pairs are disulfide-bonded: Cys166–Cys178, Cys173–Cys191, Cys185–Cys200, Cys215–Cys232, Cys222–Cys245, Cys239–Cys254, and Cys259–Cys285. Residues 259 to 372 (CGQWLKYFYG…RGFNATYQVD (114 aa)) form the CUB 2 domain. 2 N-linked (GlcNAc...) asparagine glycosylation sites follow: Asn284 and Asn366. LDL-receptor class A domains follow at residues 374 to 411 (FCLP…TNCT), 412 to 449 (MCQK…KNCF), and 450 to 486 (FCQP…ENCP). 9 disulfides stabilise this stretch: Cys375–Cys388, Cys382–Cys401, Cys395–Cys410, Cys413–Cys426, Cys420–Cys439, Cys433–Cys448, Cys451–Cys463, Cys458–Cys476, and Cys470–Cys485. N-linked (GlcNAc...) asparagine glycosylation occurs at Asn409. Asn441 carries an N-linked (GlcNAc...) asparagine glycan. The helical transmembrane segment at 493 to 513 (VITAAVIGSLICGLLLVIALG) threads the bilayer. Residues 514 to 859 (CTCKLYSLRM…TSDDEALLLC (346 aa)) are Cytoplasmic-facing. Disordered regions lie at residues 623–678 (ADGD…LPQK), 693–723 (ASSS…SPAR), 748–770 (SSLS…REDD), and 801–823 (DQGQ…SNRD). 2 stretches are compositionally biased toward polar residues: residues 748 to 757 (SSLSQNQSPL) and 801 to 814 (DQGQ…NATN).

This sequence belongs to the LDLR family. As to quaternary structure, may interact with RACK1, ZFYVE9 and NMRK2. In terms of tissue distribution, widely expressed in heart, skeletal muscle, brain, lung, placenta and pancreas, but not in tissues consisting of a large number of epithelial cells, such as liver and kidney. Expressed at very low levels in a number of tumor-derived cell lines.

It is found in the membrane. The protein localises to the coated pit. In terms of biological role, probable receptor, which may be involved in the internalization of lipophilic molecules and/or signal transduction. May act as a tumor suppressor. The polypeptide is Low-density lipoprotein receptor-related protein 12 (LRP12) (Homo sapiens (Human)).